A 197-amino-acid chain; its full sequence is Dephospho-CoA kinase (197 aa).

The DPCK domain occupies 2-197; sequence IIGITGGIAS…SALLSLANPR (196 aa). Residue 10–15 coordinates ATP; the sequence is ASGKST.

Belongs to the CoaE family.

The protein resides in the cytoplasm. The catalysed reaction is 3'-dephospho-CoA + ATP = ADP + CoA + H(+). Its pathway is cofactor biosynthesis; coenzyme A biosynthesis; CoA from (R)-pantothenate: step 5/5. Catalyzes the phosphorylation of the 3'-hydroxyl group of dephosphocoenzyme A to form coenzyme A. This chain is Dephospho-CoA kinase, found in Streptococcus pyogenes serotype M3 (strain ATCC BAA-595 / MGAS315).